The chain runs to 84 residues: Coiled-coil-helix-coiled-coil-helix domain-containing protein 7 (84 aa).

The CHCH domain occupies Ser12 to Met54. Short sequence motifs (cx9C motif) lie at residues Cys15–Cys25 and Cys36–Cys46. 2 cysteine pairs are disulfide-bonded: Cys15-Cys46 and Cys25-Cys36.

This sequence belongs to the CHCHD7 family.

The protein localises to the mitochondrion intermembrane space. This chain is Coiled-coil-helix-coiled-coil-helix domain-containing protein 7 (chchd7), found in Xenopus laevis (African clawed frog).